The primary structure comprises 133 residues: Protein OPG104 (133 aa).

Residues 1–111 (MTDEQIYAFC…RYLNQEIRYP (111 aa)) lie on the Virion surface side of the membrane. The chain crosses the membrane as a helical; Signal-anchor span at residues 112 to 132 (IIDIKWLPIGLLALAILILAF).

This sequence belongs to the orthopoxvirus OPG104 family. In terms of assembly, part of a stable entry-fusion complex (EFC) which is at least composed of proteins OPG143, OPG147, OPG155, OPG086, OPG094, OPG107, OPG104, and OPG099. Formation of the viral membrane is necessary for the assembly of the complex.

It is found in the virion membrane. Its function is as follows. Envelope protein part of the entry-fusion complex responsible for the virus membrane fusion with host cell membrane during virus entry. Also plays a role in cell-cell fusion (syncytium formation). The polypeptide is Protein OPG104 (OPG104) (Variola virus (isolate Human/India/Ind3/1967) (VARV)).